We begin with the raw amino-acid sequence, 116 residues long: Co-chaperonin GroES (116 aa).

It belongs to the GroES chaperonin family. As to quaternary structure, heptamer of 7 subunits arranged in a ring. Interacts with the chaperonin GroEL.

The protein resides in the cytoplasm. In terms of biological role, together with the chaperonin GroEL, plays an essential role in assisting protein folding. The GroEL-GroES system forms a nano-cage that allows encapsulation of the non-native substrate proteins and provides a physical environment optimized to promote and accelerate protein folding. GroES binds to the apical surface of the GroEL ring, thereby capping the opening of the GroEL channel. This chain is Co-chaperonin GroES, found in Mycoplasma pneumoniae (strain ATCC 29342 / M129 / Subtype 1) (Mycoplasmoides pneumoniae).